A 488-amino-acid polypeptide reads, in one-letter code: Ribulose bisphosphate carboxylase large chain (488 aa).

The substrate site is built by Asn-128 and Thr-178. Lys-180 serves as the catalytic Proton acceptor. Lys-182 is a binding site for substrate. Mg(2+) is bound by residues Lys-206, Asp-208, and Glu-209. At Lys-206 the chain carries N6-carboxylysine. The Proton acceptor role is filled by His-298. Arg-299, His-331, and Ser-383 together coordinate substrate.

Belongs to the RuBisCO large chain family. Type I subfamily. In terms of assembly, heterohexadecamer of 8 large chains and 8 small chains. The cofactor is Mg(2+).

The catalysed reaction is 2 (2R)-3-phosphoglycerate + 2 H(+) = D-ribulose 1,5-bisphosphate + CO2 + H2O. It carries out the reaction D-ribulose 1,5-bisphosphate + O2 = 2-phosphoglycolate + (2R)-3-phosphoglycerate + 2 H(+). RuBisCO catalyzes two reactions: the carboxylation of D-ribulose 1,5-bisphosphate, the primary event in carbon dioxide fixation, as well as the oxidative fragmentation of the pentose substrate. Both reactions occur simultaneously and in competition at the same active site. The sequence is that of Ribulose bisphosphate carboxylase large chain from Xanthobacter autotrophicus (strain ATCC BAA-1158 / Py2).